The following is a 444-amino-acid chain: Tol-Pal system protein TolB (444 aa).

An N-terminal signal peptide occupies residues 1-19 (MRNIIYFILSLLFSFKGYA).

This sequence belongs to the TolB family. In terms of assembly, the Tol-Pal system is composed of five core proteins: the inner membrane proteins TolA, TolQ and TolR, the periplasmic protein TolB and the outer membrane protein Pal. They form a network linking the inner and outer membranes and the peptidoglycan layer.

It is found in the periplasm. In terms of biological role, part of the Tol-Pal system, which plays a role in outer membrane invagination during cell division and is important for maintaining outer membrane integrity. The protein is Tol-Pal system protein TolB of Rickettsia felis (strain ATCC VR-1525 / URRWXCal2) (Rickettsia azadi).